A 117-amino-acid polypeptide reads, in one-letter code: Probable non-functional immunoglobulin heavy variable 1-38-4 (117 aa).

Residues 1-19 (MDWNWRILFLVVATTGAHS) form the signal peptide. The tract at residues 20 to 44 (QVQLVQSWAEVRKSGASVKVSCSFS) is framework-1. Residues 20-117 (QVQLVQSWAE…EDMAVYYYAR (98 aa)) form the Ig-like domain. The complementarity-determining-1 stretch occupies residues 45-52 (GFTITSYG). Residues 53–69 (IHWVQQSPGQGLEWMGW) are framework-2. Residues 70-77 (INPGNGSP) form a complementarity-determining-2 region. A glycan (N-linked (GlcNAc...) asparagine) is linked at Asn-74. The segment at 78-115 (SYAKKFQGRFTMTRDMSTTTAYTDLSSLTSEDMAVYYY) is framework-3. The tract at residues 116–117 (AR) is complementarity-determining-3.

In terms of assembly, most probably, the immunoglobulin is not assembled due to incorrect folding of heavy chain. Immunoglobulins are composed of two identical heavy chains and two identical light chains; disulfide-linked.

The protein resides in the secreted. Its subcellular location is the cell membrane. In terms of biological role, probable non-functional open reading frame (ORF) of V region of the variable domain of immunoglobulin heavy chains. Non-functional ORF generally cannot participate in the synthesis of a productive immunoglobulin chain due to altered V-(D)-J or switch recombination and/or splicing site (at mRNA level) and/or conserved amino acid change (protein level). Immunoglobulins, also known as antibodies, are membrane-bound or secreted glycoproteins produced by B lymphocytes. In the recognition phase of humoral immunity, the membrane-bound immunoglobulins serve as receptors which, upon binding of a specific antigen, trigger the clonal expansion and differentiation of B lymphocytes into immunoglobulins-secreting plasma cells. Secreted immunoglobulins mediate the effector phase of humoral immunity, which results in the elimination of bound antigens. The antigen binding site is formed by the variable domain of one heavy chain, together with that of its associated light chain. Thus, each immunoglobulin has two antigen binding sites with remarkable affinity for a particular antigen. The variable domains are assembled by a process called V-(D)-J rearrangement and can then be subjected to somatic hypermutations which, after exposure to antigen and selection, allow affinity maturation for a particular antigen. The chain is Probable non-functional immunoglobulin heavy variable 1-38-4 from Homo sapiens (Human).